Here is a 310-residue protein sequence, read N- to C-terminus: Vomeronasal type-1 receptor 101 (310 aa).

At 1–19 the chain is on the extracellular side; the sequence is MNKVNILPSDTNMKITLFS. The chain crosses the membrane as a helical span at residues 20–40; sequence ELSVGISANSILFFAHLCMFF. Residues 41-49 are Cytoplasmic-facing; it reads EENRSKPID. A helical membrane pass occupies residues 50 to 70; that stretch reads LCIAFLSLTQLMLLVTMGLIA. The Extracellular segment spans residues 71 to 93; sequence ADMFMAQGIWDITTCRSLIYFHR. Cysteines 85 and 172 form a disulfide. The chain crosses the membrane as a helical span at residues 94–114; that stretch reads LLRGFNLCAACLLHILWTFTL. Residues 115 to 134 are Cytoplasmic-facing; it reads SPRSSCLTKFKHKSPHHISG. The helical transmembrane segment at 135-155 threads the bilayer; the sequence is AYLFFCVLYMSFSSHLFVLVI. Over 156 to 193 the chain is Extracellular; it reads ATSNLTSDHFMYVTQSCSLLPMSYSRTSTFSLLMVTRE. Residue Asn159 is glycosylated (N-linked (GlcNAc...) asparagine). A helical membrane pass occupies residues 194 to 214; the sequence is VFLISLMALSSGYMVTLLWRH. Residues 215–238 are Cytoplasmic-facing; sequence KKQAQHLHSTRLSSKASPQQRATR. Residues 239 to 259 traverse the membrane as a helical segment; the sequence is TILLLMTFFVVFYILGTVIFH. Over 260–268 the chain is Extracellular; sequence SRTKFKDGS. The helical transmembrane segment at 269-289 threads the bilayer; the sequence is IFYCVQIIVSHSYATISPFVF. Over 290–310 the chain is Cytoplasmic; that stretch reads VFSEKRIIKFFRSMCGRIVNT.

The protein belongs to the G-protein coupled receptor 1 family. In terms of tissue distribution, expressed in 1-4% of neurons of the vomeronasal organ. Only one pheromone receptor gene may be expressed in a particular neuron. Not expressed in the main olfactory epithelium.

Its subcellular location is the cell membrane. Its function is as follows. Putative pheromone receptor implicated in the regulation of social as well as reproductive behavior. The polypeptide is Vomeronasal type-1 receptor 101 (Vom1r101) (Rattus norvegicus (Rat)).